Consider the following 269-residue polypeptide: Type 4 prepilin-like proteins leader peptide-processing enzyme (269 aa).

7 consecutive transmembrane segments (helical) span residues 13 to 33 (MPVL…VVIW), 102 to 122 (YPLV…VWPE), 124 to 144 (GWAL…VIDL), 147 to 167 (QWLP…AAWA), 178 to 198 (VTGV…AGIV), 210 to 230 (LLFA…VALI), and 249 to 269 (LPFG…QALF).

The protein belongs to the peptidase A24 family.

The protein resides in the cell inner membrane. It catalyses the reaction Typically cleaves a -Gly-|-Phe- bond to release an N-terminal, basic peptide of 5-8 residues from type IV prepilin, and then N-methylates the new N-terminal amino group, the methyl donor being S-adenosyl-L-methionine.. Functionally, cleaves type-4 fimbrial leader sequence and methylates the N-terminal (generally Phe) residue. The polypeptide is Type 4 prepilin-like proteins leader peptide-processing enzyme (Escherichia coli O78:H11 (strain H10407 / ETEC)).